The primary structure comprises 433 residues: Acetyl-CoA acetyltransferase erg10A, mitochondrial (433 aa).

The N-terminal 34 residues, Met-1 to Leu-34, are a transit peptide targeting the mitochondrion. Cys-124 functions as the Acyl-thioester intermediate in the catalytic mechanism. A K(+)-binding site is contributed by Tyr-219. CoA-binding residues include Asn-229 and Lys-262. Residue Ala-280 coordinates K(+). Position 284 (Ser-284) interacts with CoA. Residues His-387 and Cys-415 each act as proton acceptor in the active site. Position 416 (Asn-416) interacts with chloride.

It belongs to the thiolase-like superfamily. Thiolase family. Homotetramer. It depends on K(+) as a cofactor.

It is found in the mitochondrion. It catalyses the reaction 2 acetyl-CoA = acetoacetyl-CoA + CoA. It functions in the pathway metabolic intermediate biosynthesis; (R)-mevalonate biosynthesis; (R)-mevalonate from acetyl-CoA: step 1/3. In terms of biological role, mitochondrial acetyl-CoA acetyltransferase that catalyzes both the formation and degradation of acetoacetyl-CoA. Has no overlapping function with erg10B and seems not to be involved in ergosterol biosynthesis. Plays an important role in growth, morphogenesis and maintaining mitochondrial function including the response to oxidative stresses. The polypeptide is Acetyl-CoA acetyltransferase erg10A, mitochondrial (Aspergillus fumigatus (strain ATCC MYA-4609 / CBS 101355 / FGSC A1100 / Af293) (Neosartorya fumigata)).